The following is a 208-amino-acid chain: Urease accessory protein UreG 2 (208 aa).

16 to 23 (GPVGSGKT) contacts GTP.

Belongs to the SIMIBI class G3E GTPase family. UreG subfamily. As to quaternary structure, homodimer. UreD, UreF and UreG form a complex that acts as a GTP-hydrolysis-dependent molecular chaperone, activating the urease apoprotein by helping to assemble the nickel containing metallocenter of UreC. The UreE protein probably delivers the nickel.

It localises to the cytoplasm. In terms of biological role, facilitates the functional incorporation of the urease nickel metallocenter. This process requires GTP hydrolysis, probably effectuated by UreG. The sequence is that of Urease accessory protein UreG 2 from Methylobacterium radiotolerans (strain ATCC 27329 / DSM 1819 / JCM 2831 / NBRC 15690 / NCIMB 10815 / 0-1).